Here is a 314-residue protein sequence, read N- to C-terminus: Acetaldehyde dehydrogenase 2 (314 aa).

Position 15–18 (serine 15–isoleucine 18) interacts with NAD(+). Cysteine 133 (acyl-thioester intermediate) is an active-site residue. NAD(+)-binding positions include serine 164–asparagine 172 and asparagine 289.

This sequence belongs to the acetaldehyde dehydrogenase family.

It catalyses the reaction acetaldehyde + NAD(+) + CoA = acetyl-CoA + NADH + H(+). This is Acetaldehyde dehydrogenase 2 from Nocardioides sp. (strain ATCC BAA-499 / JS614).